Reading from the N-terminus, the 445-residue chain is Ribosomal protein uS12 methylthiotransferase RimO (445 aa).

In terms of domain architecture, MTTase N-terminal spans 4–119; it reads IKVALVSLGC…LLESIKVFLK (116 aa). [4Fe-4S] cluster-binding residues include C13, C48, C82, C156, C160, and C163. The region spanning 142-372 is the Radical SAM core domain; sequence TTPTYTAYVR…MILQQSISKD (231 aa). Residues 375–441 form the TRAM domain; it reads KEKIGKTYEV…EYDLIGVVYN (67 aa).

The protein belongs to the methylthiotransferase family. RimO subfamily. The cofactor is [4Fe-4S] cluster.

The protein localises to the cytoplasm. The catalysed reaction is L-aspartate(89)-[ribosomal protein uS12]-hydrogen + (sulfur carrier)-SH + AH2 + 2 S-adenosyl-L-methionine = 3-methylsulfanyl-L-aspartate(89)-[ribosomal protein uS12]-hydrogen + (sulfur carrier)-H + 5'-deoxyadenosine + L-methionine + A + S-adenosyl-L-homocysteine + 2 H(+). Catalyzes the methylthiolation of an aspartic acid residue of ribosomal protein uS12. This Clostridium botulinum (strain ATCC 19397 / Type A) protein is Ribosomal protein uS12 methylthiotransferase RimO.